A 296-amino-acid polypeptide reads, in one-letter code: Antisense-enhancing sequence 1 (296 aa).

Glu47 is a catalytic residue.

This sequence belongs to the PhzF family.

Its function is as follows. May have isomerase activity. Enhances target gene silencing when coexpressed with antisense RNA. The chain is Antisense-enhancing sequence 1 (aes1) from Schizosaccharomyces pombe (strain 972 / ATCC 24843) (Fission yeast).